We begin with the raw amino-acid sequence, 479 residues long: MPPARLRHPHLLLLLLLACQPQAPAAQAMDFLFQKWKLYGDQCLRNLSLLPPPTELVCNRTFDKYSCWPDTPPNTTANISCPWYLPWYHKVQHRLVFKRCGPDGQWVRGPRGQPWRNASQCQVDDEELGVQREVAEMYSSFQAMYTAGYSLSLAALLLALAILLGLSKLHCTRNYIHANLLASFVLRASSVLALDALLKTRYSQRLGDDLSVSIWLSDEAVAGCRVAAVFMQYGVVANYCWLLVEGVYLHSLLRQATIPERSCFPLYLAIGWGAPMLFVIPWAVVKCLFENIQCWTSNDNMGFWWILRFPVFLAILINFSIFIRVLHVLVAKLRAHQMRCTDYKFRLARSTLTLIPLLGVHEVVFAFVTDEHAQGALRSAKLFFDLFLSSFQGLLVAVLYCFLNKEVQAELLRRWHRWREGKALQKAHRVGSHSARPPSGPPSEKLLLSTGGSSNGTSQEPSAETHLASGLPGVAENPF.

The first 25 residues, 1-25 (MPPARLRHPHLLLLLLLACQPQAPA), serve as a signal peptide directing secretion. Over 26-136 (AQAMDFLFQK…ELGVQREVAE (111 aa)) the chain is Extracellular. 3 cysteine pairs are disulfide-bonded: Cys-43–Cys-67, Cys-58–Cys-100, and Cys-81–Cys-121. N-linked (GlcNAc...) asparagine glycosylation is found at Asn-46, Asn-59, Asn-74, Asn-78, and Asn-117. Residues 137–161 (MYSSFQAMYTAGYSLSLAALLLALA) traverse the membrane as a helical segment. Residues 162–173 (ILLGLSKLHCTR) lie on the Cytoplasmic side of the membrane. A helical membrane pass occupies residues 174-198 (NYIHANLLASFVLRASSVLALDALL). Over 199-225 (KTRYSQRLGDDLSVSIWLSDEAVAGCR) the chain is Extracellular. A disulfide bond links Cys-224 and Cys-294. Residues 226-249 (VAAVFMQYGVVANYCWLLVEGVYL) form a helical membrane-spanning segment. Residues 250–263 (HSLLRQATIPERSC) are Cytoplasmic-facing. Residues 264-285 (FPLYLAIGWGAPMLFVIPWAVV) traverse the membrane as a helical segment. The Extracellular portion of the chain corresponds to 286–303 (KCLFENIQCWTSNDNMGF). Residues 304 to 326 (WWILRFPVFLAILINFSIFIRVL) traverse the membrane as a helical segment. Topologically, residues 327-350 (HVLVAKLRAHQMRCTDYKFRLARS) are cytoplasmic. The chain crosses the membrane as a helical span at residues 351–369 (TLTLIPLLGVHEVVFAFVT). Topologically, residues 370 to 381 (DEHAQGALRSAK) are extracellular. The helical transmembrane segment at 382–402 (LFFDLFLSSFQGLLVAVLYCF) threads the bilayer. Topologically, residues 403–479 (LNKEVQAELL…GLPGVAENPF (77 aa)) are cytoplasmic. Residues 426 to 479 (KAHRVGSHSARPPSGPPSEKLLLSTGGSSNGTSQEPSAETHLASGLPGVAENPF) form a disordered region. Low complexity predominate over residues 446–458 (LLLSTGGSSNGTS). Ser-458 carries the phosphoserine modification.

The protein belongs to the G-protein coupled receptor 2 family. Ligand-binding promotes phosphorylation of serine residues in the C-terminal cytoplasmic domain. Phosphorylation is important for receptor endocytosis after ligand-binding.

It localises to the cell membrane. Its function is as follows. G-protein coupled receptor for glucagon that plays a central role in the regulation of blood glucose levels and glucose homeostasis. Regulates the rate of hepatic glucose production by promoting glycogen hydrolysis and gluconeogenesis. Plays an important role in mediating the responses to fasting. Ligand binding causes a conformation change that triggers signaling via guanine nucleotide-binding proteins (G proteins) and modulates the activity of down-stream effectors, such as adenylate cyclase. Promotes activation of adenylate cyclase. Besides, plays a role in signaling via a phosphatidylinositol-calcium second messenger system. This chain is Glucagon receptor, found in Sus scrofa (Pig).